The sequence spans 551 residues: MEREYMEFDVVIVGAGPAGLSAACRLKQKAAEAGQEISVCVVEKGSEVGAHILSGAVFEPRALNELFPDWKELGAPLNTPVTGDDIYVLKSAESATKVPNFFVPKTMHNEGNYIISLGNLCRWLAQQAEGLGVEIYPGFAAQEALIDENGVVRGIVTGDLGVDREGNPKEGYYTPGMELRAKYTLFAEGCRGHIGKQLIKKYNLDSEADAQHYGIGIKEIWDIDPSKHKPGLVVHTAGWPLNDENTGGSFLYHLENNQVFVGLIIDLSYSNPHLSPFDEFQRYKHHPVVKQYLEGGKRVAYGARAICKGGLNSLPKMVFPGGALIGCDLGTLNFAKIKGSHTAMKSGMLAADAIAEALAAGREGGDELSSYVDAFKASWLYDELFRSRNFGAAIHKFGAIGGGAFNFIDQNIFGGKIPVTLHDDKPDYACLKKASEAPKIDYPKPDGKLSFDKLSSVFLSNTNHEEDQPIHLKLADASIPIEKNLPLYDEPAQRYCPAGVYEVVANDDGSKRFQINAQNCVHCKTCDIKDPAQNITWVAPEGTGGPNYPNM.

10–24 (VVIVGAGPAGLSAAC) lines the FAD pocket. [4Fe-4S] cluster is bound by residues Cys496, Cys520, Cys523, and Cys526. One can recognise a 4Fe-4S ferredoxin-type domain in the interval 511–540 (KRFQINAQNCVHCKTCDIKDPAQNITWVAP).

The protein belongs to the ETF-QO/FixC family. The cofactor is [4Fe-4S] cluster. FAD is required as a cofactor.

The catalysed reaction is a ubiquinone + reduced [electron-transfer flavoprotein] = a ubiquinol + oxidized [electron-transfer flavoprotein] + H(+). Functionally, accepts electrons from ETF and reduces ubiquinone. The sequence is that of Electron transfer flavoprotein-ubiquinone oxidoreductase from Pseudomonas aeruginosa (strain ATCC 15692 / DSM 22644 / CIP 104116 / JCM 14847 / LMG 12228 / 1C / PRS 101 / PAO1).